A 612-amino-acid polypeptide reads, in one-letter code: 2-isopropylmalate synthase B (612 aa).

A Pyruvate carboxyltransferase domain is found at 71–344 (VRIFDTTLRD…YTGINTQHIL (274 aa)). Aspartate 80, histidine 277, and asparagine 313 together coordinate a divalent metal cation.

This sequence belongs to the alpha-IPM synthase/homocitrate synthase family. LeuA type 1 subfamily. As to quaternary structure, homodimer. It depends on a divalent metal cation as a cofactor.

The enzyme catalyses 3-methyl-2-oxobutanoate + acetyl-CoA + H2O = (2S)-2-isopropylmalate + CoA + H(+). The protein operates within amino-acid biosynthesis; L-leucine biosynthesis; L-leucine from 3-methyl-2-oxobutanoate: step 1/4. Functionally, catalyzes the condensation of the acetyl group of acetyl-CoA with 3-methyl-2-oxobutanoate (2-oxoisovalerate) to form 3-carboxy-3-hydroxy-4-methylpentanoate (2-isopropylmalate). The sequence is that of 2-isopropylmalate synthase B (IPMSB) from Solanum pennellii (Tomato).